We begin with the raw amino-acid sequence, 461 residues long: Tubulin gamma chain (461 aa).

Residue Ala142 to Gly148 participates in GTP binding.

It belongs to the tubulin family.

The protein localises to the cytoplasm. It is found in the cytoskeleton. Its subcellular location is the microtubule organizing center. The protein resides in the spindle pole body. Functionally, tubulin is the major constituent of microtubules. The gamma chain is found at microtubule organizing centers (MTOC) such as the spindle poles or the centrosome, suggesting that it is involved in the minus-end nucleation of microtubule assembly. In Neurospora crassa (strain ATCC 24698 / 74-OR23-1A / CBS 708.71 / DSM 1257 / FGSC 987), this protein is Tubulin gamma chain (tbg).